The chain runs to 480 residues: Zinc finger protein ztf-16 (480 aa).

A C2H2-type 1 zinc finger spans residues 5–27 (NACTECGFTTTVFSEFQGHIEKH). The disordered stretch occupies residues 25-75 (EKHENEHSRSSSGEMSNSQTIEWGDGIQSSTPSPRSTPPSDPTPSPDSDEH). Polar residues predominate over residues 34–45 (SSSGEMSNSQTI). Pro residues predominate over residues 59-69 (RSTPPSDPTPS). 5 C2H2-type zinc fingers span residues 103-125 (HVCP…LEAH), 133-155 (YQCD…RMRH), 161-183 (YECR…SMTH), 190-215 (FDCP…EETH), and 223-246 (ASCK…QTRH). Disordered regions lie at residues 243–275 (QTRH…MDPA), 290–311 (EFSP…DKIP), and 376–417 (TSSS…KEDE). Positions 244–259 (TRHDDSESSPKKENTP) are enriched in basic and acidic residues. Low complexity-rich tracts occupy residues 292-305 (SPPN…STSS) and 376-403 (TSSS…SLSL). A compositionally biased stretch (basic and acidic residues) spans 404 to 413 (TEKEKSPTPE). 2 consecutive C2H2-type zinc fingers follow at residues 420-442 (VECC…KSLH) and 448-472 (FKCA…FADH).

The protein belongs to the Ikaros C2H2-type zinc-finger protein family. As to expression, expressed in the somatic gonad, hypodermis and cells in the head and tail. Expressed in amphid and phasmid sheath glia, amphid and phasmid socket glia, and in neurons in the head.

It is found in the nucleus. Its function is as follows. Positively regulates the expression of ver-1 in the amphid sheath glia of amphid sensory neurons. Together with ehn-3, plays a role in somatic gonad development and is required for proper gonadal primordium assembly and somatic gonad precursor cell morphology. In Caenorhabditis elegans, this protein is Zinc finger protein ztf-16.